Consider the following 235-residue polypeptide: tRNA (cytidine-2'-O-)-methyltransferase TrmJ (235 aa).

Residues 77-79 (TSS), G111, I131, and 138-140 (PVL) contribute to the S-adenosyl-L-methionine site.

This sequence belongs to the class IV-like SAM-binding methyltransferase superfamily. RNA methyltransferase TrmH family. As to quaternary structure, homodimer.

It localises to the cytoplasm. It carries out the reaction cytidine(32) in tRNA + S-adenosyl-L-methionine = 2'-O-methylcytidine(32) in tRNA + S-adenosyl-L-homocysteine + H(+). Functionally, catalyzes the formation of 2'O-methylated cytidine (Cm32) at position 32 in tRNA. Is specific for cytidine. The polypeptide is tRNA (cytidine-2'-O-)-methyltransferase TrmJ (Sulfolobus acidocaldarius (strain ATCC 33909 / DSM 639 / JCM 8929 / NBRC 15157 / NCIMB 11770)).